The following is a 974-amino-acid chain: Membrane-associated phosphatidylinositol transfer protein 3 (974 aa).

Residues Ser-30, Ser-31, Ser-109, Ser-295, Ser-298, Ser-321, Ser-343, and Ser-495 each carry the phosphoserine modification. Positions 310-347 (CSLASSKRLSKSNVDVSSGVEDEDPKRPLPRKQSDSST) are disordered. The span at 312-325 (LASSKRLSKSNVDV) shows a compositional bias: polar residues. The DDHD domain occupies 390 to 594 (FDFDVSDFFL…VAFILRQVMR (205 aa)). A disordered region spans residues 497-535 (PLLDAPASPPQAPRFQRTERRLSKGSSHSDSSESSDSLA). A compositionally biased stretch (low complexity) spans 520–533 (KGSSHSDSSESSDS). Phosphoserine occurs at positions 612, 907, 928, and 946. Positions 927 to 974 (MSVQQPDPPAANPKPERAQSQPESDKDHERPLPALSWARGPPKFESVP) are disordered.

The protein belongs to the PtdIns transfer protein family. PI transfer class IIA subfamily. In terms of assembly, interacts with PTK2B via its C-terminus.

The protein localises to the endomembrane system. Catalyzes the transfer of phosphatidylinositol and phosphatidylcholine between membranes (in vitro). Binds calcium ions. This chain is Membrane-associated phosphatidylinositol transfer protein 3 (Pitpnm3), found in Mus musculus (Mouse).